Reading from the N-terminus, the 696-residue chain is Carotenoid dioxygenase carX (696 aa).

Residues 1-16 (MKFLQQNSFTQTSMSQ) show a composition bias toward polar residues. Residues 1–27 (MKFLQQNSFTQTSMSQPHEDVSPPLRH) form a disordered region. H244, H298, H361, and H642 together coordinate Fe(2+).

Belongs to the carotenoid oxygenase family. The cofactor is Fe(2+).

It catalyses the reaction all-trans-beta-carotene + O2 = 2 all-trans-retinal. It functions in the pathway carotenoid biosynthesis. Functionally, carotenoid dioxygenase; part of the car gene cluster that mediates the biosynthesis of neurosporaxanthin, a carboxylic apocarotenoid acting as an essential protective pigments and leading to orange pigmentation. CarX mediates the cleavage of beta-carotene produced by carAR into retinal, the rhodopsin's chromophore that is involved in the regulation of the carotenoid biosynthetic pathway via a negative feedback mechanism. It can also convert the synthetic compound beta-apo-8'-carotenal but not C35-apocarotenoids such as the acidic apocarotenoid neurosporaxanthin (C35), as well as its corresponding aldehyde beta-apo-4'-carotenal. This Gibberella fujikuroi (strain CBS 195.34 / IMI 58289 / NRRL A-6831) (Bakanae and foot rot disease fungus) protein is Carotenoid dioxygenase carX.